The primary structure comprises 141 residues: HTH-type transcriptional repressor NsrR (141 aa).

The region spanning 2-129 (QLTSFTDYAL…DDCTIEELLS (128 aa)) is the HTH rrf2-type domain. Residues 28-51 (ITEVTDLFGVSRNHMVKVINRLGQ) constitute a DNA-binding region (H-T-H motif). Residues cysteine 91, cysteine 96, and cysteine 102 each contribute to the [2Fe-2S] cluster site.

It depends on [2Fe-2S] cluster as a cofactor.

Its function is as follows. Nitric oxide-sensitive repressor of genes involved in protecting the cell against nitrosative stress. May require iron for activity. This is HTH-type transcriptional repressor NsrR from Vibrio campbellii (strain ATCC BAA-1116).